We begin with the raw amino-acid sequence, 128 residues long: Fluoride-specific ion channel FluC (128 aa).

4 helical membrane-spanning segments follow: residues 2–22, 35–55, 67–87, and 96–116; these read FYSI…RWCL, LGTL…AVVF, LFVI…SVEV, and FGWA…LTAL. Na(+) is bound by residues glycine 75 and threonine 78.

Belongs to the fluoride channel Fluc/FEX (TC 1.A.43) family.

The protein localises to the cell inner membrane. It carries out the reaction fluoride(in) = fluoride(out). With respect to regulation, na(+) is not transported, but it plays an essential structural role and its presence is essential for fluoride channel function. In terms of biological role, fluoride-specific ion channel. Important for reducing fluoride concentration in the cell, thus reducing its toxicity. The sequence is that of Fluoride-specific ion channel FluC from Burkholderia cenocepacia (strain ATCC BAA-245 / DSM 16553 / LMG 16656 / NCTC 13227 / J2315 / CF5610) (Burkholderia cepacia (strain J2315)).